Consider the following 704-residue polypeptide: Elongation factor G (704 aa).

A tr-type G domain is found at 8 to 290 (ARYRNIGISA…AVIDYLPSPV (283 aa)). GTP is bound by residues 17–24 (AHIDAGKT), 88–92 (DTPGH), and 142–145 (NKMD).

The protein belongs to the TRAFAC class translation factor GTPase superfamily. Classic translation factor GTPase family. EF-G/EF-2 subfamily.

It localises to the cytoplasm. In terms of biological role, catalyzes the GTP-dependent ribosomal translocation step during translation elongation. During this step, the ribosome changes from the pre-translocational (PRE) to the post-translocational (POST) state as the newly formed A-site-bound peptidyl-tRNA and P-site-bound deacylated tRNA move to the P and E sites, respectively. Catalyzes the coordinated movement of the two tRNA molecules, the mRNA and conformational changes in the ribosome. The chain is Elongation factor G from Salmonella arizonae (strain ATCC BAA-731 / CDC346-86 / RSK2980).